A 368-amino-acid chain; its full sequence is Polymerase delta-interacting protein 2 (368 aa).

The transit peptide at 1–21 directs the protein to the mitochondrion; sequence MAGCVARRALAVGSRWWSRSL. In terms of domain architecture, ApaG spans 235 to 360; the sequence is RETTENIRVT…FSLESNKDEK (126 aa). Position 292 is a phosphothreonine (threonine 292).

Interacts with PCNA and POLD2. Interacts with SSBP1. Interacts with PRIMPOL; leading to enhance DNA polymerase activity of PRIMPOL. Interacts with POLH. Interacts with POLD1; leading to stimulate DNA polymerase activity of POLD1.

The protein resides in the mitochondrion matrix. The protein localises to the nucleus. Its function is as follows. Involved in DNA damage tolerance by regulating translesion synthesis (TLS) of templates carrying DNA damage lesions such as 8oxoG and abasic sites. May act by stimulating activity of DNA polymerases involved in TLS, such as PRIMPOL and polymerase delta (POLD1). The sequence is that of Polymerase delta-interacting protein 2 from Mus musculus (Mouse).